The primary structure comprises 84 residues: Large ribosomal subunit protein bL27 (84 aa).

Residues 1 to 20 (MAHKKAGGSTRNGRDSHSKR) are disordered.

The protein belongs to the bacterial ribosomal protein bL27 family.

This Blochmanniella pennsylvanica (strain BPEN) protein is Large ribosomal subunit protein bL27.